A 77-amino-acid chain; its full sequence is uncharacterized protein (77 aa).

2 consecutive transmembrane segments (helical) span residues 22–42 (VFAN…LPVG) and 44–64 (LIGL…FFLG).

Its subcellular location is the cell membrane. This is an uncharacterized protein from Methanocaldococcus jannaschii (strain ATCC 43067 / DSM 2661 / JAL-1 / JCM 10045 / NBRC 100440) (Methanococcus jannaschii).